A 183-amino-acid polypeptide reads, in one-letter code: dCTP deaminase, dUMP-forming (183 aa).

Residues 99 to 104 (KSSIAR), D117, 125 to 127 (TLE), Q146, Y159, K166, and Q170 each bind dCTP. The Proton donor/acceptor role is filled by E127.

This sequence belongs to the dCTP deaminase family. In terms of assembly, homotrimer.

The enzyme catalyses dCTP + 2 H2O = dUMP + NH4(+) + diphosphate. It participates in pyrimidine metabolism; dUMP biosynthesis; dUMP from dCTP: step 1/1. Functionally, bifunctional enzyme that catalyzes both the deamination of dCTP to dUTP and the hydrolysis of dUTP to dUMP without releasing the toxic dUTP intermediate. This is dCTP deaminase, dUMP-forming from Methanoregula boonei (strain DSM 21154 / JCM 14090 / 6A8).